The sequence spans 174 residues: MEPWPLMAWGLMLTAITGWIKAVQSRDFTEKDIIFLHPSTTPYPGGFKCFTCEDAPDNYECNRWAPDLYCPRESRYCYTHHKMSWDGNTVSVTKRCVPLEDCLQTGCSDIDHEGNRVCTACCEGNICNLPLPRNETDAIFSTTSPINRSAQSTQTLPLLLLSVSITSLMLHSIN.

The N-terminal stretch at 1–22 (MEPWPLMAWGLMLTAITGWIKA) is a signal peptide. One can recognise a UPAR/Ly6 domain in the interval 47–141 (FKCFTCEDAP…PRNETDAIFS (95 aa)). 6 cysteine pairs are disulfide-bonded: Cys-49-Cys-77, Cys-52-Cys-61, Cys-70-Cys-96, Cys-102-Cys-121, Cys-107-Cys-118, and Cys-122-Cys-127. 2 N-linked (GlcNAc...) asparagine glycosylation sites follow: Asn-134 and Asn-147. Ser-149 carries the GPI-anchor amidated serine lipid modification. The propeptide at 150–174 (AQSTQTLPLLLLSVSITSLMLHSIN) is removed in mature form.

In terms of assembly, interacts with fzd8 and lrp6.

The protein localises to the cell membrane. It localises to the membrane raft. Functionally, acts as an important regulator of embryogenesis through its enhancement of Wnt/beta-catenin signaling. Positively regulates Wnt/beta-catenin signaling by ensuring phosphorylation of lrp6 specifically in plasma membrane rafts and its subsequent internalization into signaling-competent vesicles. Essential for the wnt8-mediated patterning of the mesoderm and neuroectoderm during gastrulation. This Danio rerio (Zebrafish) protein is Ly6/PLAUR domain-containing protein 6 (lypd6).